A 424-amino-acid polypeptide reads, in one-letter code: Solute carrier family 67 member A1 (424 aa).

Transmembrane regions (helical) follow at residues 26–46 (ILLTYVLAATELTCLFMQFSI), 59–79 (IAFGYLQTTFGVLQLLGGPVF), 90–110 (AALTLSFLAALALYLLLAAAS), 156–176 (LGLCFGVGVILGSLLGGTLVS), 184–204 (AILAALATLLGAVLSFTCIPA), 243–263 (IFLVKVASNCPTGLFMVMFSI), 276–296 (AGYLMSFFGLLQMVTQGLVIG), 312–332 (VLVFIVVGLAMAWMSSVFHFC), 334–354 (LVPGLVFSLCTLNVVTDSMLI), and 391–411 (FGVPVFGHVQVAINTLVLLVL).

Belongs to the major facilitator (TC 2.A.1) superfamily. Organic cation transporter (TC 2.A.1.19) family. In terms of assembly, interacts with RNF167. As to expression, expressed at high levels in adult and fetal kidney and liver, and adult colon. Expressed in fetal renal proximal tubules (at protein level). Expressed at lower levels in heart, brain and lung.

It localises to the apical cell membrane. May act as a transporter of organic cations based on a proton efflux antiport mechanism. May play a role in the transport of chloroquine and quinidine-related compounds in kidney. Plays a role in the regulation of lipid metabolism. The chain is Solute carrier family 67 member A1 from Homo sapiens (Human).